The following is a 726-amino-acid chain: Probable pre-mRNA-splicing factor ATP-dependent RNA helicase DEAH2 (726 aa).

The 170-residue stretch at 71 to 240 (LKTLNNNQTL…FSGAPLMKVP (170 aa)) folds into the Helicase ATP-binding domain. Residue 84-91 (GETGSGKT) coordinates ATP. A DEAH box motif is present at residues 187–190 (DEAH). The Helicase C-terminal domain occupies 265-445 (TVVQIHMCEP…NTVLTLKKLG (181 aa)).

It belongs to the DEAD box helicase family. DEAH subfamily. PRP43 sub-subfamily.

The catalysed reaction is ATP + H2O = ADP + phosphate + H(+). In terms of biological role, may be involved in pre-mRNA splicing. The sequence is that of Probable pre-mRNA-splicing factor ATP-dependent RNA helicase DEAH2 from Arabidopsis thaliana (Mouse-ear cress).